Reading from the N-terminus, the 122-residue chain is uncharacterized protein (122 aa).

Residues 1-20 (MGFHFCIWIIFLLPPPCKKC) form the signal peptide.

The protein localises to the secreted. This is an uncharacterized protein from Homo sapiens (Human).